Consider the following 1040-residue polypeptide: Multidrug resistance protein MdtB (1040 aa).

A run of 11 helical transmembrane segments spans residues 15–37 (LFIL…GIIG), 345–362 (FELM…YLFL), 367–389 (ATII…MVFL), 396–418 (LTLM…VIEN), 438–460 (GEIG…PLLF), 472–494 (FAVT…TPMM), 535–557 (HPWL…WIVI), 867–889 (VWLI…ESFI), 909–931 (LIIA…IGIV), 968–990 (ILMT…GVGT), and 1000–1022 (MVGG…YLLF).

The protein belongs to the resistance-nodulation-cell division (RND) (TC 2.A.6) family. MdtB subfamily. As to quaternary structure, part of a tripartite efflux system composed of MdtA, MdtB and MdtC. MdtB forms a heteromultimer with MdtC.

It localises to the cell inner membrane. This is Multidrug resistance protein MdtB from Salmonella typhimurium (strain LT2 / SGSC1412 / ATCC 700720).